A 483-amino-acid chain; its full sequence is General transcription factor IIH subunit 4 (483 aa).

The disordered stretch occupies residues 93–117; sequence PQQQQSSQQSSSQQQQQQQQQQQQT. The span at 94-116 shows a compositional bias: low complexity; sequence QQQQSSQQSSSQQQQQQQQQQQQ.

The protein belongs to the TFB2 family. Component of the 7-subunit TFIIH core complex composed of XPB/repB, XPD/repD, gtf2h1, gtf2h2, gtf2h3, gtf2h4 and gtf2h5, which is active in NER. The core complex associates with the 3-subunit CDK-activating kinase (CAK) module composed of cycH/cyclin H, cdk7 and mnat1 to form the 10-subunit holoenzyme (holo-TFIIH) active in transcription.

It localises to the nucleus. Functionally, component of the general transcription and DNA repair factor IIH (TFIIH) core complex, which is involved in general and transcription-coupled nucleotide excision repair (NER) of damaged DNA and, when complexed to CAK, in RNA transcription by RNA polymerase II. In NER, TFIIH acts by opening DNA around the lesion to allow the excision of the damaged oligonucleotide and its replacement by a new DNA fragment. In transcription, TFIIH has an essential role in transcription initiation. When the pre-initiation complex (PIC) has been established, TFIIH is required for promoter opening and promoter escape. Phosphorylation of the C-terminal tail (CTD) of the largest subunit of RNA polymerase II by the kinase module CAK controls the initiation of transcription. This chain is General transcription factor IIH subunit 4 (gtf2h4), found in Dictyostelium discoideum (Social amoeba).